Here is a 311-residue protein sequence, read N- to C-terminus: Probable deoxyhypusine synthase (311 aa).

The active-site Nucleophile is the K284.

Belongs to the deoxyhypusine synthase family. The cofactor is NAD(+).

It carries out the reaction [eIF5A protein]-L-lysine + spermidine = [eIF5A protein]-deoxyhypusine + propane-1,3-diamine. Its pathway is protein modification; eIF5A hypusination. Functionally, catalyzes the NAD-dependent oxidative cleavage of spermidine and the subsequent transfer of the butylamine moiety of spermidine to the epsilon-amino group of a specific lysine residue of the eIF-5A precursor protein to form the intermediate deoxyhypusine residue. The protein is Probable deoxyhypusine synthase (dys) of Sulfurisphaera tokodaii (strain DSM 16993 / JCM 10545 / NBRC 100140 / 7) (Sulfolobus tokodaii).